Reading from the N-terminus, the 266-residue chain is N-acetylneuraminate lyase B (266 aa).

Residues T51 and T52 each coordinate aceneuramate. Residue Y143 is the Proton donor of the active site. The active-site Schiff-base intermediate with substrate is K173. 5 residues coordinate aceneuramate: S175, G197, D199, E200, and S216.

It belongs to the DapA family. NanA subfamily. As to quaternary structure, homotetramer.

The protein resides in the cytoplasm. The enzyme catalyses aceneuramate = aldehydo-N-acetyl-D-mannosamine + pyruvate. The protein operates within amino-sugar metabolism; N-acetylneuraminate degradation. Functionally, catalyzes the cleavage of N-acetylneuraminic acid (sialic acid) to form pyruvate and N-acetylmannosamine via a Schiff base intermediate. It prevents sialic acids from being recycled and returning to the cell surface. Involved in the N-glycolylneuraminic acid (Neu5Gc) degradation pathway. The protein is N-acetylneuraminate lyase B (npl-b) of Xenopus laevis (African clawed frog).